Here is a 305-residue protein sequence, read N- to C-terminus: uncharacterized protein (305 aa).

Over residues 1-10 (MLWAQRKKRK) the composition is skewed to basic residues. Residues 1–30 (MLWAQRKKRKATTETTEDKPAESHRPNDSW) are disordered. Residues 16-27 (TEDKPAESHRPN) show a composition bias toward basic and acidic residues. Ser39 carries the post-translational modification Phosphoserine. A compositionally biased stretch (polar residues) spans 92–101 (QKISGTSVSK). The disordered stretch occupies residues 92 to 114 (QKISGTSVSKEMQRESGKSPSME). Ser158 carries the post-translational modification Phosphoserine. The segment covering 197 to 208 (SHHGNQSHQNHN) has biased composition (low complexity). Positions 197–305 (SHHGNQSHQN…VNRRNQIYDS (109 aa)) are disordered. Composition is skewed to polar residues over residues 209–221 (TYPC…SRSV) and 231–244 (LSHQ…SHQN). Residues 247–293 (GHPSQQGHSSHSNQQGHLGLSSQQGHPSQSSHQSHQGQPGHPNHQSH) are compositionally biased toward low complexity. A compositionally biased stretch (polar residues) spans 294 to 305 (SLVNRRNQIYDS).

This is an uncharacterized protein from Rattus norvegicus (Rat).